The following is a 203-amino-acid chain: ATP-dependent Clp protease proteolytic subunit 2 (203 aa).

S98 acts as the Nucleophile in catalysis. H123 is a catalytic residue.

The protein belongs to the peptidase S14 family. Fourteen ClpP subunits assemble into 2 heptameric rings which stack back to back to give a disk-like structure with a central cavity, resembling the structure of eukaryotic proteasomes.

Its subcellular location is the cytoplasm. The catalysed reaction is Hydrolysis of proteins to small peptides in the presence of ATP and magnesium. alpha-casein is the usual test substrate. In the absence of ATP, only oligopeptides shorter than five residues are hydrolyzed (such as succinyl-Leu-Tyr-|-NHMec, and Leu-Tyr-Leu-|-Tyr-Trp, in which cleavage of the -Tyr-|-Leu- and -Tyr-|-Trp bonds also occurs).. Functionally, cleaves peptides in various proteins in a process that requires ATP hydrolysis. Has a chymotrypsin-like activity. Plays a major role in the degradation of misfolded proteins. The sequence is that of ATP-dependent Clp protease proteolytic subunit 2 from Chlamydia pneumoniae (Chlamydophila pneumoniae).